A 284-amino-acid chain; its full sequence is MINQIKTYLLMALLVGLIYAICMMLHIHPLIAIILALIPNVIAYYMSDKLVLMSYNARILEEHEMPWLHQMVERVARKAGLPKPKVAIVPTETPNAFATGRNPENAVVAVTEGILKLLSPEELEGVIGHEISHIKHRDILISTIVATLAGAIVMIAEWMLYWGGIFFVSEEEESNPLELIGTILLLILAPIAATIIQFAISRQREFYADEEGAKLTHPLWLANALAKLERGVELYPLERGNPATAHMFIINPFRKDFIAKLFSTHPPTEERIERLLEMCKRIGK.

2 helical membrane passes run 7-26 (TYLL…MMLH) and 33-47 (IILA…YYMS). His-129 provides a ligand contact to Zn(2+). The active site involves Glu-130. His-133 is a binding site for Zn(2+). 2 helical membrane passes run 148-168 (LAGA…IFFV) and 180-200 (IGTI…QFAI). Glu-205 contacts Zn(2+).

This sequence belongs to the peptidase M48B family. The cofactor is Zn(2+).

The protein resides in the cell membrane. This Methanocaldococcus jannaschii (strain ATCC 43067 / DSM 2661 / JAL-1 / JCM 10045 / NBRC 100440) (Methanococcus jannaschii) protein is Protease HtpX homolog.